We begin with the raw amino-acid sequence, 168 residues long: Shikimate kinase (168 aa).

Residue 11 to 16 participates in ATP binding; it reads GAGKTT. Thr-15 provides a ligand contact to Mg(2+). The substrate site is built by Asp-33, Arg-57, and Gly-78. Arg-118 is an ATP binding site. Residue Arg-136 coordinates substrate. An ATP-binding site is contributed by Arg-153.

The protein belongs to the shikimate kinase family. As to quaternary structure, monomer. Mg(2+) is required as a cofactor.

It localises to the cytoplasm. The catalysed reaction is shikimate + ATP = 3-phosphoshikimate + ADP + H(+). The protein operates within metabolic intermediate biosynthesis; chorismate biosynthesis; chorismate from D-erythrose 4-phosphate and phosphoenolpyruvate: step 5/7. In terms of biological role, catalyzes the specific phosphorylation of the 3-hydroxyl group of shikimic acid using ATP as a cosubstrate. In Enterococcus faecalis (strain ATCC 700802 / V583), this protein is Shikimate kinase.